Here is a 265-residue protein sequence, read N- to C-terminus: Acrosomal protein SP-10 (265 aa).

The N-terminal stretch at 1–21 (MNRFLLLMSLYLLGSARGTSS) is a signal peptide. The tract at residues 62–181 (LNTLSEHGSS…EQASGAPISS (120 aa)) is disordered. Repeat copies occupy residues 66-70 (SEHGS), 71-75 (SEHGS), 85-88 (SGEH), 91-95 (SEHAS), 110-114 (VGEQP), 115-119 (SGEQP), 120-123 (SGEH), 125-129 (SGEQP), 135-139 (SGEQP), 140-144 (SDEQP), 145-148 (SGEH), 150-154 (SGEQP), 155-159 (SGEQA), 160-164 (SGEQP), 165-168 (SGEH), and 170-174 (SGEQA). Residues 66-95 (SEHGSSEHGSSKHTVAEHTSGEHAESEHAS) are 3 X 5 AA repeats of S-E-H-[GA]-S. The span at 69–110 (GSSEHGSSKHTVAEHTSGEHAESEHASGEPAATEHAEGEHTV) shows a compositional bias: basic and acidic residues. A 4 X 4 AA repeats of S-G-E-H region spans residues 85–168 (SGEHAESEHA…ASGEQPSGEH (84 aa)). The interval 110-174 (VGEQPSGEQP…SGEHASGEQA (65 aa)) is 9 X 5 AA repeats of [SV]-G-E-Q-[PSA]. Residues 152-163 (EQPSGEQASGEQ) show a composition bias toward polar residues. Residue Asn-258 is glycosylated (N-linked (GlcNAc...) asparagine).

In terms of tissue distribution, testis.

It localises to the cytoplasmic vesicle. The protein resides in the secretory vesicle. The protein localises to the acrosome. This chain is Acrosomal protein SP-10 (ACRV1), found in Homo sapiens (Human).